A 231-amino-acid chain; its full sequence is Octanoyltransferase (231 aa).

The BPL/LPL catalytic domain occupies 49-231; it reads SEAAEQVWLL…KRTFSEVFGS (183 aa). Substrate-binding positions include 87–94, 162–164, and 175–177; these read RGGQITYH, AIG, and GVS. The Acyl-thioester intermediate role is filled by Cys-193.

Belongs to the LipB family.

It is found in the cytoplasm. The catalysed reaction is octanoyl-[ACP] + L-lysyl-[protein] = N(6)-octanoyl-L-lysyl-[protein] + holo-[ACP] + H(+). It functions in the pathway protein modification; protein lipoylation via endogenous pathway; protein N(6)-(lipoyl)lysine from octanoyl-[acyl-carrier-protein]: step 1/2. Its function is as follows. Catalyzes the transfer of endogenously produced octanoic acid from octanoyl-acyl-carrier-protein onto the lipoyl domains of lipoate-dependent enzymes. Lipoyl-ACP can also act as a substrate although octanoyl-ACP is likely to be the physiological substrate. The polypeptide is Octanoyltransferase (Nitrobacter winogradskyi (strain ATCC 25391 / DSM 10237 / CIP 104748 / NCIMB 11846 / Nb-255)).